A 754-amino-acid chain; its full sequence is 5-methyltetrahydropteroyltriglutamate--homocysteine methyltransferase (754 aa).

Residues R17–K20 and K117 contribute to the 5-methyltetrahydropteroyltri-L-glutamate site. L-homocysteine contacts are provided by residues I431–S433 and E484. Residues I431–S433 and E484 contribute to the L-methionine site. Residues R515–C516 and W561 each bind 5-methyltetrahydropteroyltri-L-glutamate. Residue D599 coordinates L-homocysteine. D599 contributes to the L-methionine binding site. E605 provides a ligand contact to 5-methyltetrahydropteroyltri-L-glutamate. Zn(2+) is bound by residues H641, C643, and E665. Catalysis depends on H694, which acts as the Proton donor. C726 contributes to the Zn(2+) binding site.

It belongs to the vitamin-B12 independent methionine synthase family. It depends on Zn(2+) as a cofactor.

It carries out the reaction 5-methyltetrahydropteroyltri-L-glutamate + L-homocysteine = tetrahydropteroyltri-L-glutamate + L-methionine. It participates in amino-acid biosynthesis; L-methionine biosynthesis via de novo pathway; L-methionine from L-homocysteine (MetE route): step 1/1. In terms of biological role, catalyzes the transfer of a methyl group from 5-methyltetrahydrofolate to homocysteine resulting in methionine formation. The protein is 5-methyltetrahydropteroyltriglutamate--homocysteine methyltransferase of Salmonella enteritidis PT4 (strain P125109).